We begin with the raw amino-acid sequence, 877 residues long: DNA polymerase I (877 aa).

Residues 177 to 270 (TPAQFIDLKA…LEDLVYSGPD (94 aa)) enclose the 5'-3' exonuclease domain. The 3'-5' exonuclease domain occupies 302 to 465 (DFTIVDQISQ…TEPILLEKLS (164 aa)).

The protein belongs to the DNA polymerase type-A family. Single-chain monomer with multiple functions.

The catalysed reaction is DNA(n) + a 2'-deoxyribonucleoside 5'-triphosphate = DNA(n+1) + diphosphate. In terms of biological role, in addition to polymerase activity, this DNA polymerase exhibits 3'-5' and 5'-3' exonuclease activity. In Streptococcus pneumoniae (strain ATCC BAA-255 / R6), this protein is DNA polymerase I (polA).